Reading from the N-terminus, the 330-residue chain is Peroxidase 42 (330 aa).

The first 23 residues, 1 to 23 (MGGKGVMMVAILCLWALSATSEA), serve as a signal peptide directing secretion. 4 disulfides stabilise this stretch: Cys40–Cys119, Cys73–Cys78, Cys125–Cys323, and Cys204–Cys231. His71 serves as the catalytic Proton acceptor. Ca(2+) contacts are provided by Asp72, Val75, Asp79, and Ser81. Pro167 is a substrate binding site. Asn170 carries an N-linked (GlcNAc...) asparagine glycan. Heme b is bound at residue His197. Ser198 is a Ca(2+) binding site. Ca(2+)-binding residues include Asp247, Thr250, and Asp255.

It belongs to the peroxidase family. Classical plant (class III) peroxidase subfamily. It depends on heme b as a cofactor. The cofactor is Ca(2+). Constitutively expressed in the whole plant, with the highest expression in roots.

The protein localises to the secreted. It catalyses the reaction 2 a phenolic donor + H2O2 = 2 a phenolic radical donor + 2 H2O. Removal of H(2)O(2), oxidation of toxic reductants, biosynthesis and degradation of lignin, suberization, auxin catabolism, response to environmental stresses such as wounding, pathogen attack and oxidative stress. These functions might be dependent on each isozyme/isoform in each plant tissue. Its function is as follows. Might function as heat shock-like defense protein. The protein is Peroxidase 42 (PER42) of Arabidopsis thaliana (Mouse-ear cress).